A 472-amino-acid polypeptide reads, in one-letter code: Methanethiol oxidase (472 aa).

Belongs to the selenium-binding protein family.

The protein resides in the nucleus. The protein localises to the cytoplasm. Its subcellular location is the cytosol. It localises to the membrane. It catalyses the reaction methanethiol + O2 + H2O = hydrogen sulfide + formaldehyde + H2O2 + H(+). Its pathway is organosulfur degradation. Functionally, catalyzes the oxidation of methanethiol, an organosulfur compound known to be produced in substantial amounts by gut bacteria. Selenium-binding protein which may be involved in the sensing of reactive xenobiotics in the cytoplasm. May be involved in intra-Golgi protein transport. In Xenopus tropicalis (Western clawed frog), this protein is Methanethiol oxidase (selenbp1).